The sequence spans 501 residues: Endoglucanase 8 (501 aa).

The signal sequence occupies residues M1–A35. The active-site Nucleophile is the D95. N298 is a glycosylation site (N-linked (GlcNAc...) asparagine). H414 is a catalytic residue. N462 carries an N-linked (GlcNAc...) asparagine glycan. The active site involves D465. N-linked (GlcNAc...) asparagine glycosylation occurs at N469. E474 is an active-site residue.

Belongs to the glycosyl hydrolase 9 (cellulase E) family.

It is found in the secreted. It carries out the reaction Endohydrolysis of (1-&gt;4)-beta-D-glucosidic linkages in cellulose, lichenin and cereal beta-D-glucans.. The protein is Endoglucanase 8 of Oryza sativa subsp. japonica (Rice).